The primary structure comprises 498 residues: Dynein regulatory complex subunit 5 (498 aa).

Disordered regions lie at residues A27–K52 and M200–K223. Positions L28–G47 are enriched in low complexity. 6 LRR repeats span residues C276 to R299, A306 to K327, R333 to A353, N361 to H382, C389 to S409, and T417 to E438.

It belongs to the DRC5 family. In terms of assembly, component of the nexin-dynein regulatory complex (N-DRC). Interacts with DRC1. Interacts with FBXL13/DRC6, DRC3 and DRC7. Testis-specific (at protein level).

Its subcellular location is the cell projection. The protein resides in the cilium. The protein localises to the flagellum. It is found in the cytoplasm. It localises to the cytoskeleton. Its subcellular location is the flagellum axoneme. Its function is as follows. Component of the nexin-dynein regulatory complex (N-DRC) a key regulator of ciliary/flagellar motility which maintains the alignment and integrity of the distal axoneme and regulates microtubule sliding in motile axonemes. May play a role in the assembly of N-DRC. Required for sperm motility. The polypeptide is Dynein regulatory complex subunit 5 (Tcte1) (Mus musculus (Mouse)).